The sequence spans 508 residues: Photosystem II CP47 reaction center protein (508 aa).

Helical transmembrane passes span 21 to 36 (SVHI…WAGS), 101 to 115 (IVFS…IWHW), 140 to 156 (GIHL…FGAF), 203 to 218 (IAAG…FHLS), 237 to 252 (VLSS…AFVV), and 457 to 472 (TFAL…HGAR).

The protein belongs to the PsbB/PsbC family. PsbB subfamily. As to quaternary structure, PSII is composed of 1 copy each of membrane proteins PsbA, PsbB, PsbC, PsbD, PsbE, PsbF, PsbH, PsbI, PsbJ, PsbK, PsbL, PsbM, PsbT, PsbX, PsbY, PsbZ, Psb30/Ycf12, at least 3 peripheral proteins of the oxygen-evolving complex and a large number of cofactors. It forms dimeric complexes. It depends on Binds multiple chlorophylls. PSII binds additional chlorophylls, carotenoids and specific lipids. as a cofactor.

It localises to the plastid. It is found in the chloroplast thylakoid membrane. Functionally, one of the components of the core complex of photosystem II (PSII). It binds chlorophyll and helps catalyze the primary light-induced photochemical processes of PSII. PSII is a light-driven water:plastoquinone oxidoreductase, using light energy to abstract electrons from H(2)O, generating O(2) and a proton gradient subsequently used for ATP formation. This Chloranthus spicatus (Chulantree) protein is Photosystem II CP47 reaction center protein.